Here is a 531-residue protein sequence, read N- to C-terminus: Cytochrome P450 monooxygenase ffsD (531 aa).

Residues 40-60 form a helical membrane-spanning segment; the sequence is VGALLGISLSVVLLLWVISVV. Cys-475 is a binding site for heme.

Belongs to the cytochrome P450 family. Heme is required as a cofactor.

The protein resides in the membrane. Its pathway is mycotoxin biosynthesis. Functionally, cytochrome P450 monooxygenase; part of the gene cluster that mediates the biosynthesis of the cytotoxic leucine-containing cytochalasans, including aspochalasin C, aspochalasin E, TMC-169, flavichalasine F, aspergillin PZ, aspochalasin M and flavichalasine G. The first step in the pathway is catalyzed by the hybrid PKS-NRPS ffsA that utilizes 8 units of malonyl-CoA to iteratively assemble the octaketide chain before addition of L-leucine by the C-terminal NRPS modules. Because ffsA lacks a designated enoylreductase (ER) domain, the required activity is provided the enoyl reductase fssC. The methyltransferase (MT) domain of ffsA catalyzes the alpha-methylation at C10 and C14 using S-adenosyl-L-methionine as the methyl-donating cosubstrate. Reduction by the hydrolyase ffsE, followed by dehydration and intra-molecular Diels-Alder cyclization by the Diels-Alderase ffsF then yield the required isoindolone-fused macrocycle. A number of oxidative steps catalyzed by the tailoring cytochrome P450 monooxygenase ffsD, the FAD-linked oxidoreductase ffsJ and the short-chain dehydrogenase/reductase ffsI, are further required to afford the final products. In Aspergillus flavipes, this protein is Cytochrome P450 monooxygenase ffsD.